Consider the following 127-residue polypeptide: Glycine cleavage system H protein (127 aa).

The 83-residue stretch at 22 to 104 (QVVIGITHFA…YEGAWMVKVE (83 aa)) folds into the Lipoyl-binding domain. Lysine 63 bears the N6-lipoyllysine mark.

This sequence belongs to the GcvH family. The glycine cleavage system is composed of four proteins: P, T, L and H. (R)-lipoate is required as a cofactor.

Functionally, the glycine cleavage system catalyzes the degradation of glycine. The H protein shuttles the methylamine group of glycine from the P protein to the T protein. Its function is as follows. Is also involved in protein lipoylation via its role as an octanoyl/lipoyl carrier protein intermediate. The sequence is that of Glycine cleavage system H protein from Bacillus cytotoxicus (strain DSM 22905 / CIP 110041 / 391-98 / NVH 391-98).